The chain runs to 455 residues: Glycosyl hydrolase family 109 protein (455 aa).

Residues 1-33 (MAGIDRRGFLKASMASVAAAALAGCASQQGTSA) constitute a signal peptide (tat-type signal). NAD(+)-binding positions include 62 to 63 (ER), aspartate 84, glutamine 112, 133 to 136 (WALH), 153 to 154 (EV), and asparagine 182. Substrate is bound by residues tyrosine 211, arginine 230, 242 to 245 (YPTH), and tyrosine 324. Tyrosine 242 is a binding site for NAD(+).

This sequence belongs to the Gfo/Idh/MocA family. Glycosyl hydrolase 109 subfamily. NAD(+) serves as cofactor. In terms of processing, predicted to be exported by the Tat system. The position of the signal peptide cleavage has not been experimentally proven.

In terms of biological role, glycosidase. This is Glycosyl hydrolase family 109 protein from Shewanella amazonensis (strain ATCC BAA-1098 / SB2B).